Consider the following 360-residue polypeptide: Capsular polysaccharide phosphotransferase LcbA (360 aa).

This sequence belongs to the stealth family.

Functionally, part of a group II capsule biosynthesis locus. The chain is Capsular polysaccharide phosphotransferase LcbA (lcbA) from Aeromonas hydrophila.